The following is a 204-amino-acid chain: Protease (204 aa).

Catalysis depends on residues His54, Asp71, and Cys121.

It belongs to the peptidase C5 family. As to quaternary structure, interacts with protease cofactor pVI-C; this interaction is necessary for protease activation.

The protein resides in the virion. The protein localises to the host nucleus. It catalyses the reaction Cleaves proteins of the adenovirus and its host cell at two consensus sites: -Yaa-Xaa-Gly-Gly-|-Xaa- and -Yaa-Xaa-Gly-Xaa-|-Gly- (in which Yaa is Met, Ile or Leu, and Xaa is any amino acid).. With respect to regulation, requires DNA and protease cofactor for maximal activation. Inside nascent virions, becomes partially activated by binding to the viral DNA, allowing it to cleave the cofactor that binds to the protease and fully activates it. Actin, like the viral protease cofactor, seems to act as a cofactor in the cleavage of cytokeratin 18 and of actin itself. Functionally, cleaves viral precursor proteins (pTP, pIIIa, pVI, pVII, pVIII, and pX) inside newly assembled particles giving rise to mature virions. Protease complexed to its cofactor slides along the viral DNA to specifically locate and cleave the viral precursors. Mature virions have a weakened organization compared to the unmature virions, thereby facilitating subsequent uncoating. Without maturation, the particle lacks infectivity and is unable to uncoat. Late in adenovirus infection, in the cytoplasm, may participate in the cytoskeleton destruction. Cleaves host cell cytoskeletal keratins K7 and K18. This is Protease from Frog adenovirus 1 (strain ATCC VR-896) (FrAdV-1).